The following is a 765-amino-acid chain: Protein transport protein Sec23A (765 aa).

Threonine 2 is modified (N-acetylthreonine). Zn(2+) is bound by residues cysteine 61, cysteine 66, cysteine 85, and cysteine 88. Residue threonine 308 is modified to Phosphothreonine. The Gelsolin-like repeat unit spans residues 632–718 (PEPVLLDSSS…EHGGSQARFL (87 aa)).

It belongs to the SEC23/SEC24 family. SEC23 subfamily. As to quaternary structure, COPII is composed of at least five proteins: the Sec23/24 complex, the Sec13/31 complex and Sar1. Interacts with SEC23IP. Interacts with HTR4. Interacts with SEC16A. Interacts with SLC6A4. Interacts (as part of the Sec23/24 complex) with SEC22B; recruits SEC22B into COPII-coated vesicles and allows the transport of this cargo from the endoplasmic reticulum to the Golgi. Interacts (via Gelsolin-like repeat) with MIA2 and MIA3; specifically involved in the transport of large cargos like the collagen COL7A1. Interacts with DDHD1. Interacts with TMEM39A. Interacts with SACM1L; this interaction is reduced in the absence of TMEM39A. Interacts with kinase FAM20C; transport of FAM20C from the endoplasmic reticulum to the Golgi is likely to be mediated by COPII vesicles.

It localises to the cytoplasmic vesicle. Its subcellular location is the COPII-coated vesicle membrane. The protein resides in the endoplasmic reticulum membrane. The protein localises to the cytoplasm. It is found in the cytosol. Component of the coat protein complex II (COPII) which promotes the formation of transport vesicles from the endoplasmic reticulum (ER). The coat has two main functions, the physical deformation of the endoplasmic reticulum membrane into vesicles and the selection of cargo molecules for their transport to the Golgi complex. Required for the translocation of insulin-induced glucose transporter SLC2A4/GLUT4 to the cell membrane. In Pongo abelii (Sumatran orangutan), this protein is Protein transport protein Sec23A.